We begin with the raw amino-acid sequence, 348 residues long: Dihydroorotase (348 aa).

Residues His17 and His19 each coordinate Zn(2+). Substrate is bound by residues 19–21 (HLR) and Asn45. Zn(2+)-binding residues include Lys103, His140, and His178. Lys103 is subject to N6-carboxylysine. His140 is a binding site for substrate. Leu223 is a substrate binding site. Asp251 contributes to the Zn(2+) binding site. The active site involves Asp251. Substrate-binding residues include His255 and Ala267.

Belongs to the metallo-dependent hydrolases superfamily. DHOase family. Class II DHOase subfamily. Homodimer. Requires Zn(2+) as cofactor.

The enzyme catalyses (S)-dihydroorotate + H2O = N-carbamoyl-L-aspartate + H(+). Its pathway is pyrimidine metabolism; UMP biosynthesis via de novo pathway; (S)-dihydroorotate from bicarbonate: step 3/3. Functionally, catalyzes the reversible cyclization of carbamoyl aspartate to dihydroorotate. The protein is Dihydroorotase of Edwardsiella ictaluri (strain 93-146).